Consider the following 215-residue polypeptide: Ribose-5-phosphate isomerase A (215 aa).

Substrate is bound by residues 26-29, 79-82, and 92-95; these read TGST, DGAD, and KGGG. Glu-101 (proton acceptor) is an active-site residue. A substrate-binding site is contributed by Lys-119.

It belongs to the ribose 5-phosphate isomerase family. As to quaternary structure, homodimer.

It carries out the reaction aldehydo-D-ribose 5-phosphate = D-ribulose 5-phosphate. The protein operates within carbohydrate degradation; pentose phosphate pathway; D-ribose 5-phosphate from D-ribulose 5-phosphate (non-oxidative stage): step 1/1. Catalyzes the reversible conversion of ribose-5-phosphate to ribulose 5-phosphate. The sequence is that of Ribose-5-phosphate isomerase A from Xanthomonas campestris pv. campestris (strain 8004).